The chain runs to 94 residues: Small ribosomal subunit protein bS18c (94 aa).

This sequence belongs to the bacterial ribosomal protein bS18 family. Part of the 30S ribosomal subunit.

It is found in the plastid. The protein resides in the chloroplast. The protein is Small ribosomal subunit protein bS18c of Manihot esculenta (Cassava).